The chain runs to 1043 residues: RNA-directed RNA polymerase (1043 aa).

Residues 26–42 (VPLAKSLALVAGSCVVY) form a helical membrane-spanning segment. Positions 43–1043 (KIIVHRRTLV…GPAGSRGRGK (1001 aa)) are cytoplasmic. The tract at residues 105–291 (NGHPISGGTR…LVWCLPVASY (187 aa)) is capping. Positions 588–713 (EEPSEGDFSN…ERRFAKNYAK (126 aa)) constitute a RdRp catalytic domain. The For RdRp/TNTase activity role is filled by Asp-699. Disordered regions lie at residues 879–902 (NRDN…GRVD) and 918–1043 (NQVT…GRGK). Low complexity-rich tracts occupy residues 922–934 (SSQA…GDAS) and 1032–1043 (SRGPAGSRGRGK).

This sequence belongs to the nodaviridae RNA polymerase family. Homododecamer. Forms 2 stacked rings of 35-nm in diameter, arranged in a crown-like structure at the opening of virus-induced replication vesicles. Interacts with protein B2. It depends on Mn(2+) as a cofactor.

It localises to the host mitochondrion outer membrane. It carries out the reaction RNA(n) + a ribonucleoside 5'-triphosphate = RNA(n+1) + diphosphate. In terms of biological role, RNA-dependent RNA polymerase, which replicates the viral genome composed of 2 RNA segments, RNA1 and RNA2. Does not need an exogenous primer. Also possesses a terminal nucleotidyl transferase (TNTase) activity. The TNTase catalyzes the addition of nucleotide to the 3'-end of plus- and minus-stranded RNAs, probably to repair the 3'-end nucleotide loss. Forms the open necked connection to the cytosol of the virus-induced replication vesicles. Mediates viral RNA1 recruitment. This is RNA-directed RNA polymerase from Nodamura virus (strain Mag115) (NoV).